Reading from the N-terminus, the 378-residue chain is Anhydro-N-acetylmuramic acid kinase (378 aa).

9-16 (GTSADGID) is a binding site for ATP.

It belongs to the anhydro-N-acetylmuramic acid kinase family.

It carries out the reaction 1,6-anhydro-N-acetyl-beta-muramate + ATP + H2O = N-acetyl-D-muramate 6-phosphate + ADP + H(+). The protein operates within amino-sugar metabolism; 1,6-anhydro-N-acetylmuramate degradation. Its pathway is cell wall biogenesis; peptidoglycan recycling. Its function is as follows. Catalyzes the specific phosphorylation of 1,6-anhydro-N-acetylmuramic acid (anhMurNAc) with the simultaneous cleavage of the 1,6-anhydro ring, generating MurNAc-6-P. Is required for the utilization of anhMurNAc either imported from the medium or derived from its own cell wall murein, and thus plays a role in cell wall recycling. This Prochlorococcus marinus (strain NATL1A) protein is Anhydro-N-acetylmuramic acid kinase.